The sequence spans 124 residues: Small ribosomal subunit protein uS12 (124 aa).

The tract at residues 1-23 (MATINQLVRKPRRSKVTKSNSAA) is disordered. D89 bears the 3-methylthioaspartic acid mark.

The protein belongs to the universal ribosomal protein uS12 family. In terms of assembly, part of the 30S ribosomal subunit. Contacts proteins S8 and S17. May interact with IF1 in the 30S initiation complex.

Functionally, with S4 and S5 plays an important role in translational accuracy. In terms of biological role, interacts with and stabilizes bases of the 16S rRNA that are involved in tRNA selection in the A site and with the mRNA backbone. Located at the interface of the 30S and 50S subunits, it traverses the body of the 30S subunit contacting proteins on the other side and probably holding the rRNA structure together. The combined cluster of proteins S8, S12 and S17 appears to hold together the shoulder and platform of the 30S subunit. The polypeptide is Small ribosomal subunit protein uS12 (Pseudoalteromonas translucida (strain TAC 125)).